We begin with the raw amino-acid sequence, 486 residues long: Glutamate--tRNA ligase (486 aa).

The 'HIGH' region motif lies at 11-21 (PSPTGFLHIGG). Residues Cys108, Cys110, Cys136, and His138 each coordinate Zn(2+). Residues 253 to 257 (KLSKR) carry the 'KMSKS' region motif. Lys256 is an ATP binding site.

Belongs to the class-I aminoacyl-tRNA synthetase family. Glutamate--tRNA ligase type 1 subfamily. In terms of assembly, monomer. It depends on Zn(2+) as a cofactor.

The protein resides in the cytoplasm. The enzyme catalyses tRNA(Glu) + L-glutamate + ATP = L-glutamyl-tRNA(Glu) + AMP + diphosphate. Catalyzes the attachment of glutamate to tRNA(Glu) in a two-step reaction: glutamate is first activated by ATP to form Glu-AMP and then transferred to the acceptor end of tRNA(Glu). The polypeptide is Glutamate--tRNA ligase (Lysinibacillus sphaericus (strain C3-41)).